The primary structure comprises 142 residues: Large ribosomal subunit protein uL11 (142 aa).

This sequence belongs to the universal ribosomal protein uL11 family. In terms of assembly, part of the ribosomal stalk of the 50S ribosomal subunit. Interacts with L10 and the large rRNA to form the base of the stalk. L10 forms an elongated spine to which L12 dimers bind in a sequential fashion forming a multimeric L10(L12)X complex. One or more lysine residues are methylated.

In terms of biological role, forms part of the ribosomal stalk which helps the ribosome interact with GTP-bound translation factors. The protein is Large ribosomal subunit protein uL11 of Beijerinckia indica subsp. indica (strain ATCC 9039 / DSM 1715 / NCIMB 8712).